Here is a 205-residue protein sequence, read N- to C-terminus: uncharacterized protein (205 aa).

The 61-residue stretch at 11 to 71 folds into the HTH tetR-type domain; the sequence is KTRRALVDAA…EMVDEAGLML (61 aa).

This is an uncharacterized protein from Haemophilus influenzae (strain ATCC 51907 / DSM 11121 / KW20 / Rd).